A 272-amino-acid chain; its full sequence is tRNA pseudouridine synthase A (272 aa).

The Nucleophile role is filled by aspartate 62. Tyrosine 120 contributes to the substrate binding site.

It belongs to the tRNA pseudouridine synthase TruA family. Homodimer.

The enzyme catalyses uridine(38/39/40) in tRNA = pseudouridine(38/39/40) in tRNA. Functionally, formation of pseudouridine at positions 38, 39 and 40 in the anticodon stem and loop of transfer RNAs. The protein is tRNA pseudouridine synthase A of Nitrosomonas europaea (strain ATCC 19718 / CIP 103999 / KCTC 2705 / NBRC 14298).